Reading from the N-terminus, the 155-residue chain is MSRKGSTPQRTVLPDPKHGSETIARFINMVMQSGKKSVAEKIVYGAMDVIGEKNPNAIELVQKALDNVAPAVEVKSRRVGGATYQVPVEVRSSRRMALAMRWLIDSARKRGENTMPRKLAAELLDAAESRGGAIKKREETHRMAEANKAFAHYRW.

The protein belongs to the universal ribosomal protein uS7 family. In terms of assembly, part of the 30S ribosomal subunit. Contacts proteins S9 and S11.

In terms of biological role, one of the primary rRNA binding proteins, it binds directly to 16S rRNA where it nucleates assembly of the head domain of the 30S subunit. Is located at the subunit interface close to the decoding center, probably blocks exit of the E-site tRNA. The polypeptide is Small ribosomal subunit protein uS7 (Xanthomonas oryzae pv. oryzae (strain MAFF 311018)).